A 97-amino-acid polypeptide reads, in one-letter code: Cell division topological specificity factor (97 aa).

It belongs to the MinE family.

Prevents the cell division inhibition by proteins MinC and MinD at internal division sites while permitting inhibition at polar sites. This ensures cell division at the proper site by restricting the formation of a division septum at the midpoint of the long axis of the cell. In Rhodospirillum centenum (strain ATCC 51521 / SW), this protein is Cell division topological specificity factor.